The sequence spans 365 residues: L-lactate oxidase (365 aa).

The FMN hydroxy acid dehydrogenase domain maps to 6–365 (RIPPGVWNAI…ITHDTLTPSC (360 aa)). Tyr32 is a binding site for pyruvate. FMN-binding positions include 85 to 87 (PVA), Ser114, and Gln135. Residue Tyr137 coordinates pyruvate. Residues Thr163, Lys237, and Ser259 each contribute to the FMN site. 2 residues coordinate pyruvate: His261 and Arg264. The active-site Proton acceptor is His261. FMN-binding positions include 292–296 (DGGVR) and Arg316.

The protein belongs to the FMN-dependent alpha-hydroxy acid dehydrogenase family. In terms of assembly, homotetramer. It depends on FMN as a cofactor.

It catalyses the reaction (S)-lactate + O2 = pyruvate + H2O2. The enzyme catalyses glycolate + O2 = glyoxylate + H2O2. Catalyzes the oxidation of (S)-lactate (L-lactate) to pyruvate, with a reduction of O2 to H2O2. To a lesser extent is also able to use glycolate as substrate. This chain is L-lactate oxidase, found in Alicycliphilus denitrificans (strain DSM 14773 / CIP 107495 / K601).